Consider the following 273-residue polypeptide: Formamidopyrimidine-DNA glycosylase (273 aa).

The active-site Schiff-base intermediate with DNA is the proline 2. Glutamate 3 (proton donor) is an active-site residue. Lysine 58 acts as the Proton donor; for beta-elimination activity in catalysis. DNA is bound by residues histidine 91, arginine 109, and arginine 154. Residues phenylalanine 239–lysine 273 form an FPG-type zinc finger. The active-site Proton donor; for delta-elimination activity is the arginine 263.

Belongs to the FPG family. Monomer. Requires Zn(2+) as cofactor.

It catalyses the reaction Hydrolysis of DNA containing ring-opened 7-methylguanine residues, releasing 2,6-diamino-4-hydroxy-5-(N-methyl)formamidopyrimidine.. The catalysed reaction is 2'-deoxyribonucleotide-(2'-deoxyribose 5'-phosphate)-2'-deoxyribonucleotide-DNA = a 3'-end 2'-deoxyribonucleotide-(2,3-dehydro-2,3-deoxyribose 5'-phosphate)-DNA + a 5'-end 5'-phospho-2'-deoxyribonucleoside-DNA + H(+). In terms of biological role, involved in base excision repair of DNA damaged by oxidation or by mutagenic agents. Acts as a DNA glycosylase that recognizes and removes damaged bases. Has a preference for oxidized purines, such as 7,8-dihydro-8-oxoguanine (8-oxoG). Has AP (apurinic/apyrimidinic) lyase activity and introduces nicks in the DNA strand. Cleaves the DNA backbone by beta-delta elimination to generate a single-strand break at the site of the removed base with both 3'- and 5'-phosphates. The protein is Formamidopyrimidine-DNA glycosylase of Janthinobacterium sp. (strain Marseille) (Minibacterium massiliensis).